Here is a 1374-residue protein sequence, read N- to C-terminus: Sterol 3-beta-glucosyltransferase (1374 aa).

Basic and acidic residues predominate over residues 1–14; that stretch reads MRPLRDDAKRRADR. Disordered stretches follow at residues 1 to 60, 83 to 190, and 206 to 227; these read MRPL…RDGN, ARFD…PRAA, and TSAT…QPQS. Residues 16-28 show a composition bias toward polar residues; the sequence is LSASMKPTSSNRP. Positions 29 to 41 are enriched in basic and acidic residues; it reads FSDRVPDRFKDGD. Polar residues predominate over residues 101–112; that stretch reads VEQTTGKASSRT. The span at 125–138 shows a compositional bias: basic and acidic residues; the sequence is KRSEPSKLVLEERG. One can recognise a GRAM 1 domain in the interval 234–283; that stretch reads MRLMKMFEFAKPEKVLVEYACSLLQSMLLQGYMYVTEGHICFYAYLPKKS. Residues 285–382 form the PH domain; it reads VAIKSGYLSK…WVKALQQVIF (98 aa). The segment at 458-538 is disordered; it reads ATKEAQDQHD…SMTDTTESAS (81 aa). 2 stretches are compositionally biased toward basic and acidic residues: residues 461 to 473 and 490 to 499; these read EAQD…HQPE and SDQRREDSPR. Residues 503–538 show a composition bias toward polar residues; sequence SSVGNENQGSADSFAEQGTGSSPIIQSMTDTTESAS. In terms of domain architecture, GRAM 2 spans 704 to 770; the sequence is DRFRAHFALP…KDIENVEKEK (67 aa). Residues Ser893, Arg894, Asp896, Ala1196, His1198, His1211, Gly1215, Thr1216, Asp1235, and Gln1236 each coordinate UDP-alpha-D-glucose. Positions 1314–1325 are enriched in polar residues; sequence ASSTPFSPTPTA. Residues 1314-1338 are disordered; that stretch reads ASSTPFSPTPTAKASPDGGDDDLDD.

Belongs to the glycosyltransferase 28 family.

The protein localises to the cytoplasm. Its subcellular location is the preautophagosomal structure membrane. The catalysed reaction is a sterol + UDP-alpha-D-glucose = a sterol 3-beta-D-glucoside + UDP + H(+). It catalyses the reaction ergosterol + UDP-alpha-D-glucose = ergosteryl 3-beta-D-glucoside + UDP + H(+). Its function is as follows. Sterol glycosyltransferase responsible for the glycosylation of ergosterol to form ergosterol-glucoside. The polypeptide is Sterol 3-beta-glucosyltransferase (Penicillium rubens (strain ATCC 28089 / DSM 1075 / NRRL 1951 / Wisconsin 54-1255) (Penicillium chrysogenum)).